Reading from the N-terminus, the 179-residue chain is Interleukin-22 (179 aa).

The first 33 residues, 1 to 33, serve as a signal peptide directing secretion; the sequence is MAVLQKSMSFSLMGTLAASCLLLIALWAQEANA. 2 cysteine pairs are disulfide-bonded: cysteine 40/cysteine 132 and cysteine 89/cysteine 178. N-linked (GlcNAc...) asparagine glycans are attached at residues asparagine 54, asparagine 68, and asparagine 97.

The protein belongs to the IL-10 family.

The protein localises to the secreted. Functionally, cytokine that plays a critical role in modulating tissue responses during inflammation. Plays an essential role in the regeneration of epithelial cells to maintain barrier function after injury and for the prevention of further tissue damage. Unlike most of the cytokines, has no effect on immune cells. Signals through a heterodimeric receptor composed of two subunits, the specific receptor IL22RA1 which is present on non-immune cells in many organs and the shared subunit IL10RB. Ligation of IL22RA1 with IL22 induces activation of the tyrosine kinases JAK1 and TYK2, which in turn activates STAT3. In turn, promotes cell survival and proliferation through STAT3, ERK1/2 and PI3K/AKT pathways. Promotes phosphorylation of GSK3B at 'Ser-9' and CTTN. Promotes epithelial cell spreading. The sequence is that of Interleukin-22 (Il22) from Mus musculus (Mouse).